The sequence spans 672 residues: uncharacterized protein (672 aa).

Residues 1-24 (MKTLKVLKIFIIVYISSVSLESFA) form the signal peptide. Transmembrane regions (helical) follow at residues 226-246 (IIGA…ALNK) and 254-274 (ITLF…LGPL). The span at 363–372 (SNGTSGNNKP) shows a compositional bias: polar residues. The disordered stretch occupies residues 363-384 (SNGTSGNNKPIPNFDPDGKKDR). Helical transmembrane passes span 410–430 (IILV…LYFI), 436–456 (CMVT…MVLF), 469–489 (VCIS…LLIT), and 562–582 (VVSI…FYYF). The span at 628–646 (HGKSSLGDKPDIGNKRKDG) shows a compositional bias: basic and acidic residues. A disordered region spans residues 628 to 672 (HGKSSLGDKPDIGNKRKDGAQQGEDAVNSSGGEVADLASGSGGGK).

The protein belongs to the TrbL/VirB6 family.

It is found in the cell membrane. This is an uncharacterized protein from Rickettsia prowazekii (strain Madrid E).